The sequence spans 158 residues: Protein-export protein SecB (158 aa).

The protein belongs to the SecB family. In terms of assembly, homotetramer, a dimer of dimers. One homotetramer interacts with 1 SecA dimer.

It is found in the cytoplasm. Its function is as follows. One of the proteins required for the normal export of preproteins out of the cell cytoplasm. It is a molecular chaperone that binds to a subset of precursor proteins, maintaining them in a translocation-competent state. It also specifically binds to its receptor SecA. In Yersinia pestis (strain Pestoides F), this protein is Protein-export protein SecB.